We begin with the raw amino-acid sequence, 143 residues long: Anti-sigma F factor (143 aa).

This sequence belongs to the anti-sigma-factor family.

The enzyme catalyses L-seryl-[protein] + ATP = O-phospho-L-seryl-[protein] + ADP + H(+). It carries out the reaction L-threonyl-[protein] + ATP = O-phospho-L-threonyl-[protein] + ADP + H(+). Binds to sigma F and blocks its ability to form an RNA polymerase holoenzyme (E-sigma F). Phosphorylates SpoIIAA on a serine residue. This phosphorylation may enable SpoIIAA to act as an anti-anti-sigma factor that counteracts SpoIIAB and thus releases sigma F from inhibition. This chain is Anti-sigma F factor, found in Clostridium botulinum (strain Alaska E43 / Type E3).